The sequence spans 353 residues: Ubiquinol oxidase 2, mitochondrial (353 aa).

The N-terminal 21 residues, 1–21 (MSQLITKAALRVLLVCGRGNC), are a transit peptide targeting the mitochondrion. The chain crosses the membrane as a helical span at residues 178 to 198 (AMMLETVAAVPGMVGGMLLHL). The Fe cation site is built by Glu-182, Glu-221, and His-224. The chain crosses the membrane as a helical span at residues 240–260 (LLVMLVQGIFFNSFFVCYVIS). The Fe cation site is built by Glu-272, Glu-323, and His-326.

The protein belongs to the alternative oxidase family. As to quaternary structure, homodimer; disulfide-linked. Fe cation is required as a cofactor. In terms of tissue distribution, maximally expressed in dry seeds. Detected in roots, stems and leaves.

The protein resides in the mitochondrion inner membrane. The enzyme catalyses 2 a ubiquinol + O2 = 2 a ubiquinone + 2 H2O. Catalyzes the cyanide-resistant oxidation of ubiquinol and the reduction of molecular oxygen to water, but does not translocate protons and consequently is not linked to oxidative phosphorylation. May increase respiration when the cytochrome respiratory pathway is restricted, or in response to low temperatures. This is Ubiquinol oxidase 2, mitochondrial (AOX2) from Arabidopsis thaliana (Mouse-ear cress).